Reading from the N-terminus, the 438-residue chain is Mannan endo-1,4-beta-mannosidase F (438 aa).

The signal sequence occupies residues 1–17 (MHPLPSVALLSAIGAVA). Residues 19 to 54 (QVGPWGQCGGRSYTGETSCVSGWSCVLFNEWYSQCQ) enclose the CBM1 domain. Positions 60-96 (STSSVSATAAPSSTSSSKESVPSATTSKKPVPTGSSS) are ser-rich linker. Residues 61 to 86 (TSSVSATAAPSSTSSSKESVPSATTS) are compositionally biased toward low complexity. The disordered stretch occupies residues 61–92 (TSSVSATAAPSSTSSSKESVPSATTSKKPVPT). The segment at 97–438 (FVKADGLKFN…CGVADHLSTL (342 aa)) is catalytic. Trp-149 and Asn-263 together coordinate substrate. Glu-264 acts as the Proton donor in catalysis. N-linked (GlcNAc...) asparagine glycosylation is present at Asn-277. Tyr-339 provides a ligand contact to substrate. Residue Glu-373 is the Nucleophile of the active site. Residue Trp-402 coordinates substrate.

Belongs to the glycosyl hydrolase 5 (cellulase A) family.

Its subcellular location is the secreted. It carries out the reaction Random hydrolysis of (1-&gt;4)-beta-D-mannosidic linkages in mannans, galactomannans and glucomannans.. Endo-1,4-mannanase, a crucial enzyme for depolymerization of seed galactomannans and wood galactoglucomannans. This Aspergillus fumigatus (strain ATCC MYA-4609 / CBS 101355 / FGSC A1100 / Af293) (Neosartorya fumigata) protein is Mannan endo-1,4-beta-mannosidase F (manF).